The following is a 156-amino-acid chain: Transthyretin-like protein 1 (156 aa).

Positions 1 to 17 are cleaved as a signal peptide; sequence MKIALSFLFLTSTFSNA. N-linked (GlcNAc...) asparagine glycosylation occurs at asparagine 151.

The protein belongs to the nematode transthyretin-like family.

The protein resides in the secreted. The sequence is that of Transthyretin-like protein 1 (ttr-1) from Caenorhabditis elegans.